The following is a 62-amino-acid chain: Conotoxin Qc5.1 (62 aa).

The signal sequence occupies residues 1 to 22; sequence MRCVPVFIILLLLSPSAPSVDA. The propeptide occupies 23 to 48; it reads HPMTKDDVPQASFHDDAKRTLQVPWM. A Valine amide modification is found at valine 60.

Belongs to the conotoxin T superfamily. In terms of processing, contains 2 disulfide bonds that can be either 'C1-C3, C2-C4' or 'C1-C4, C2-C3', since these disulfide connectivities have been observed for conotoxins with cysteine framework V (for examples, see AC P0DQQ7 and AC P81755). Expressed by the venom duct.

It localises to the secreted. The chain is Conotoxin Qc5.1 from Conus quercinus (Oak cone).